Reading from the N-terminus, the 422-residue chain is Transcription termination factor Rho 1 (422 aa).

Residues 49–124 (AAIGGGVVEI…VKAHSINFTD (76 aa)) enclose the Rho RNA-BD domain. ATP is bound by residues 173–178 (GKGQRA), 185–190 (RAGKTI), and R216.

The protein belongs to the Rho family. In terms of assembly, homohexamer. The homohexamer assembles into an open ring structure.

In terms of biological role, facilitates transcription termination by a mechanism that involves Rho binding to the nascent RNA, activation of Rho's RNA-dependent ATPase activity, and release of the mRNA from the DNA template. The chain is Transcription termination factor Rho 1 from Ehrlichia chaffeensis (strain ATCC CRL-10679 / Arkansas).